The following is a 1026-amino-acid chain: Contactin-4 (1026 aa).

Positions 1-18 (MRLPWELLVLQSFILCLA) are cleaved as a signal peptide. 6 consecutive Ig-like C2-type domains span residues 32 to 117 (PSPV…AKLQ), 122 to 207 (DNFK…KVLG), 225 to 311 (PKIE…GQLT), 316 to 400 (PNWI…AELS), 406 to 493 (PDFS…GNLV), and 497 to 586 (PTRV…DRLS). Cystine bridges form between Cys50–Cys100, Cys144–Cys194, Cys247–Cys295, Cys337–Cys384, Cys429–Cys477, and Cys519–Cys576. N-linked (GlcNAc...) asparagine glycosylation is found at Asn65, Asn90, and Asn191. Asn370, Asn375, and Asn466 each carry an N-linked (GlcNAc...) asparagine glycan. Fibronectin type-III domains follow at residues 599-697 (PPEA…TEEA), 702-799 (TPAN…SAEE), 804-899 (PPAS…TRKP), and 900-995 (PPSQ…ISNA). The segment at 685–710 (PSRPSEKRRTEEALPEVTPANVSGGG) is disordered. Over residues 687-696 (RPSEKRRTEE) the composition is skewed to basic and acidic residues. Asn705, Asn764, Asn858, Asn893, Asn911, Asn929, and Asn954 each carry an N-linked (GlcNAc...) asparagine glycan. Over residues 886–896 (GPSSATVNVTT) the composition is skewed to polar residues. Residues 886 to 907 (GPSSATVNVTTRKPPPSQPPGN) form a disordered region. Ser1000 carries GPI-anchor amidated serine lipidation. A propeptide spans 1001 to 1026 (GASTSNACTLSAISTIMISLTARSSL) (removed in mature form).

It belongs to the immunoglobulin superfamily. Contactin family. Interacts with PTPRG. Mainly expressed in brain. Highly expressed in cerebellum and weakly expressed in corpus callosum, caudate nucleus, amygdala and spinal cord. Also expressed in testis, pancreas, thyroid, uterus, small intestine and kidney. Not expressed in skeletal muscle. Isoform 2 is weakly expressed in cerebral cortex.

The protein localises to the cell membrane. It is found in the secreted. Functionally, contactins mediate cell surface interactions during nervous system development. Has some neurite outgrowth-promoting activity. May be involved in synaptogenesis. The chain is Contactin-4 (CNTN4) from Homo sapiens (Human).